The primary structure comprises 254 residues: Autophagy-related protein 5 (254 aa).

Lys102 is covalently cross-linked (Glycyl lysine isopeptide (Lys-Gly) (interchain with G-Cter in ATG12)).

The protein belongs to the ATG5 family. As to quaternary structure, conjugated with ATG12. The ATG5-ATG12 conjugate forms a complex with several units of ATG16. The ATG12-ATG5 conjugate also associates with ATG3. Conjugated to ATG12; which is essential for autophagy. Conjugation with ATG12 involves ATG7 as an E1-like activating enzyme and ATG10 as an E2-like conjugating enzyme.

It localises to the preautophagosomal structure membrane. Involved in cytoplasm to vacuole transport (Cvt) and autophagic vesicle formation. Autophagy is essential for maintenance of amino acid levels and protein synthesis under nitrogen starvation. Required for selective autophagic degradation of the nucleus (nucleophagy). Also required for mitophagy, which eliminates defective or superfluous mitochondria in order to fulfill cellular energy requirements and prevent excess ROS production. Conjugation with ATG12, through a ubiquitin-like conjugating system involving ATG7 as an E1-like activating enzyme and ATG10 as an E2-like conjugating enzyme, is essential for its function. The ATG12-ATG5 conjugate acts as an E3-like enzyme which is required for lipidation of ATG8 and ATG8 association to the vesicle membranes. ATG12-ATG5 rearranges the ATG3 catalytic center and enhances its E2 activity. Autophagy is required for proper vegetative growth, asexual/sexual reproduction, and full virulence. Autophagy is particularly involved in the biosynthesis of deoxynivalenol (DON), an important virulence determinant. This chain is Autophagy-related protein 5, found in Gibberella zeae (strain ATCC MYA-4620 / CBS 123657 / FGSC 9075 / NRRL 31084 / PH-1) (Wheat head blight fungus).